The primary structure comprises 413 residues: Cardiolipin synthase B (413 aa).

PLD phosphodiesterase domains lie at 108–135 and 285–312; these read VFRR…SAEH and RRRP…DPLS. Residues H113, K115, D120, H290, K292, and D297 contribute to the active site. Residues 390 to 413 are disordered; the sequence is VDPPAQPTMETQDRVETENTGVKP.

The protein belongs to the phospholipase D family. Cardiolipin synthase subfamily. ClsB sub-subfamily.

It is found in the cell membrane. The enzyme catalyses 2 a 1,2-diacyl-sn-glycero-3-phospho-(1'-sn-glycerol) = a cardiolipin + glycerol. In terms of biological role, catalyzes the phosphatidyl group transfer from one phosphatidylglycerol molecule to another to form cardiolipin (CL) (diphosphatidylglycerol) and glycerol. The chain is Cardiolipin synthase B from Escherichia coli O157:H7.